The primary structure comprises 130 residues: Glycine cleavage system H protein (130 aa).

One can recognise a Lipoyl-binding domain in the interval 25–106 (VALIGITDFA…PFDTWMVKLK (82 aa)). An N6-lipoyllysine modification is found at Lys66.

This sequence belongs to the GcvH family. As to quaternary structure, the glycine cleavage system is composed of four proteins: P, T, L and H. It depends on (R)-lipoate as a cofactor.

In terms of biological role, the glycine cleavage system catalyzes the degradation of glycine. The H protein shuttles the methylamine group of glycine from the P protein to the T protein. This Leptospira biflexa serovar Patoc (strain Patoc 1 / Ames) protein is Glycine cleavage system H protein.